We begin with the raw amino-acid sequence, 89 residues long: Small ribosomal subunit protein uS15 (89 aa).

The protein belongs to the universal ribosomal protein uS15 family. Part of the 30S ribosomal subunit. Forms a bridge to the 50S subunit in the 70S ribosome, contacting the 23S rRNA.

Its function is as follows. One of the primary rRNA binding proteins, it binds directly to 16S rRNA where it helps nucleate assembly of the platform of the 30S subunit by binding and bridging several RNA helices of the 16S rRNA. Forms an intersubunit bridge (bridge B4) with the 23S rRNA of the 50S subunit in the ribosome. This Lactobacillus gasseri (strain ATCC 33323 / DSM 20243 / BCRC 14619 / CIP 102991 / JCM 1131 / KCTC 3163 / NCIMB 11718 / NCTC 13722 / AM63) protein is Small ribosomal subunit protein uS15.